Reading from the N-terminus, the 357-residue chain is Undecaprenyl-phosphate alpha-N-acetylglucosaminyl 1-phosphate transferase (357 aa).

A run of 7 helical transmembrane segments spans residues 40 to 60 (GAIPLIGGVSLFVGNLCFYLL), 64 to 84 (QMRLPTLYLFSIFVLLVIGMI), 124 to 144 (FQLTLGSIGLIITVLATIAAI), 183 to 203 (WSFALIIAILPYFMMNLGIPF), 209 to 229 (VFMGDAGSTLIGFTIIWILLL), 238 to 258 (MNPVTALWIIAIPLIDMIAIM), and 291 to 311 (FLLITFAAAICATIGILGEIF).

It belongs to the glycosyltransferase 4 family. WecA subfamily. Mg(2+) is required as a cofactor. It depends on Mn(2+) as a cofactor.

It is found in the cell inner membrane. The enzyme catalyses di-trans,octa-cis-undecaprenyl phosphate + UDP-N-acetyl-alpha-D-glucosamine = N-acetyl-alpha-D-glucosaminyl-di-trans,octa-cis-undecaprenyl diphosphate + UMP. It participates in bacterial outer membrane biogenesis; LPS O-antigen biosynthesis. In terms of biological role, catalyzes the transfer of the GlcNAc-1-phosphate moiety from UDP-GlcNAc onto the carrier lipid undecaprenyl phosphate (C55-P), yielding GlcNAc-pyrophosphoryl-undecaprenyl (GlcNAc-PP-C55). The polypeptide is Undecaprenyl-phosphate alpha-N-acetylglucosaminyl 1-phosphate transferase (Pasteurella multocida (strain Pm70)).